Here is a 920-residue protein sequence, read N- to C-terminus: Isoleucine--tRNA ligase (920 aa).

The 'HIGH' region signature appears at P58–H68. E569 contacts L-isoleucyl-5'-AMP. The 'KMSKS' region motif lies at K610–S614. ATP is bound at residue K613. Zn(2+) contacts are provided by C895, C898, C910, and C913.

The protein belongs to the class-I aminoacyl-tRNA synthetase family. IleS type 1 subfamily. Monomer. Zn(2+) is required as a cofactor.

The protein localises to the cytoplasm. The enzyme catalyses tRNA(Ile) + L-isoleucine + ATP = L-isoleucyl-tRNA(Ile) + AMP + diphosphate. Catalyzes the attachment of isoleucine to tRNA(Ile). As IleRS can inadvertently accommodate and process structurally similar amino acids such as valine, to avoid such errors it has two additional distinct tRNA(Ile)-dependent editing activities. One activity is designated as 'pretransfer' editing and involves the hydrolysis of activated Val-AMP. The other activity is designated 'posttransfer' editing and involves deacylation of mischarged Val-tRNA(Ile). The chain is Isoleucine--tRNA ligase from Helicobacter pylori (strain G27).